Consider the following 115-residue polypeptide: U3-lycotoxin-Ls1p (115 aa).

Positions 1 to 20 are cleaved as a signal peptide; it reads MKFVLLFGVLLVTLFSYSSA. Positions 21-44 are excised as a propeptide; the sequence is EMFDDFDQADEDELLSLIEKEEAR. Intrachain disulfides connect Cys48-Cys63, Cys55-Cys72, Cys62-Cys87, and Cys74-Cys85.

Belongs to the neurotoxin 19 (CSTX) family. 01 subfamily. As to expression, expressed by the venom gland.

It is found in the secreted. This is U3-lycotoxin-Ls1p from Lycosa singoriensis (Wolf spider).